A 1077-amino-acid chain; its full sequence is Receptor-type guanylate cyclase daf-11 (1077 aa).

N-linked (GlcNAc...) asparagine glycosylation is found at Asn-14, Asn-112, Asn-149, and Asn-311. Residues 335 to 355 (TGVIIAIAVIMGVLLMFIIIL) traverse the membrane as a helical segment. The 341-residue stretch at 355–695 (LTTIRKCCNG…LARKIIDTVL (341 aa)) folds into the Protein kinase domain. Topologically, residues 356 to 1077 (TTIRKCCNGS…DSQASTIPDN (722 aa)) are cytoplasmic. In terms of domain architecture, Guanylate cyclase spans 765-895 (TILYSDIVGF…EAVILASKME (131 aa)). Positions 770, 771, and 814 each coordinate Mg(2+). A coiled-coil region spans residues 983-1034 (KDKMTLAKEKVIAERKNEEERLQRQQTLQEALEEHEEEIEMNEVLVDEDEGE). Positions 1048–1077 (TQMEELEDEPAGRTIGHGRLDSQASTIPDN) are disordered.

This sequence belongs to the adenylyl cyclase class-4/guanylyl cyclase family. As to expression, expressed in sensory neurons including ASI, ASJ, ASK, AWB and AWC. Expressed in ASJ neurons in the dauer stage.

It is found in the cell membrane. Its subcellular location is the cell projection. The protein localises to the dendrite. The protein resides in the cilium. It localises to the perikaryon. It carries out the reaction GTP = 3',5'-cyclic GMP + diphosphate. Guanylate cyclase involved in the production of the second messenger cGMP. In addition, regulates cGMP levels by controlling the transcription of 3',5'-cyclic phosphodiesterase pde-1 and pde-5 mRNAs. Involved in the olfactory, light and pheromone sensing pathways. Part of the chemosensory mechanism of the ASJ sensory neuron that controls dauer formation and dauer recovery. Promotes the calcium flux in ASJ sensory neurons in response to onset and removal of a nitric oxide (NO) stimulus and is thereby required for the behavioral avoidance response to NO-producing organisms like P.aeruginosa. In ASI and ASJ sensory neurons, controls dauer formation and behavioral response to P.aeruginosa by up-regulating the transcription of daf-7, a member of the TGF-beta family. Required for the chemotaxis responses to non-volatile and volatile attractants mediated by the sensory neurons ASE and AWC respectively. Required in ASJ neurons for phototransduction downstream of G protein coupled-photoreceptor lite-1. Plays a role in the development of ASJ sensory neuron axons during late larval stages and in the maintenance of normal axon morphology in adults. Required to maintain the expression of putative olfactory receptor str-2 in one of the two AWC neurons in adults. Regulates, via the production of cGMP, lifespan (in some environmental conditions), sensitivity to oxidative stress and entry into quiescence triggered by satiety. In AWB and AWC sensory neurons, mediates the recognition of food odors which subsequently allows for the detection of preferred food sources. The sequence is that of Receptor-type guanylate cyclase daf-11 from Caenorhabditis elegans.